The following is a 37-amino-acid chain: Large ribosomal subunit protein bL36 (37 aa).

Belongs to the bacterial ribosomal protein bL36 family.

The polypeptide is Large ribosomal subunit protein bL36 (Clostridium perfringens (strain ATCC 13124 / DSM 756 / JCM 1290 / NCIMB 6125 / NCTC 8237 / Type A)).